A 243-amino-acid chain; its full sequence is Tryptophan synthase alpha chain (243 aa).

Active-site proton acceptor residues include E32 and D43.

It belongs to the TrpA family. In terms of assembly, tetramer of two alpha and two beta chains.

The protein resides in the plastid. It is found in the chloroplast. It catalyses the reaction (1S,2R)-1-C-(indol-3-yl)glycerol 3-phosphate + L-serine = D-glyceraldehyde 3-phosphate + L-tryptophan + H2O. Its pathway is amino-acid biosynthesis; L-tryptophan biosynthesis; L-tryptophan from chorismate: step 5/5. Functionally, the alpha subunit is responsible for the aldol cleavage of indoleglycerol phosphate to indole and glyceraldehyde 3-phosphate. This is Tryptophan synthase alpha chain from Cyanidioschyzon merolae (strain NIES-3377 / 10D) (Unicellular red alga).